Reading from the N-terminus, the 303-residue chain is Probable cell division protein WhiA (303 aa).

The segment at residues 272–303 (SIQQLADSLSTPLTKSGVNHRLRKINKIADEL) is a DNA-binding region (H-T-H motif).

It belongs to the WhiA family.

In terms of biological role, involved in cell division and chromosome segregation. This chain is Probable cell division protein WhiA, found in Streptococcus pneumoniae serotype 2 (strain D39 / NCTC 7466).